We begin with the raw amino-acid sequence, 369 residues long: Protein RecA (369 aa).

Residue 66-73 participates in ATP binding; sequence GPESSGKT. Residues 328–369 form a disordered region; sequence GIDAESLEEKEDPEKVKEQRAKKAAPGEEKPAEPASPEKTDK. Positions 339 to 369 are enriched in basic and acidic residues; it reads DPEKVKEQRAKKAAPGEEKPAEPASPEKTDK.

It belongs to the RecA family.

It is found in the cytoplasm. Functionally, can catalyze the hydrolysis of ATP in the presence of single-stranded DNA, the ATP-dependent uptake of single-stranded DNA by duplex DNA, and the ATP-dependent hybridization of homologous single-stranded DNAs. It interacts with LexA causing its activation and leading to its autocatalytic cleavage. This Lactobacillus delbrueckii subsp. bulgaricus (strain ATCC BAA-365 / Lb-18) protein is Protein RecA.